The following is a 513-amino-acid chain: Activin receptor type-2A (513 aa).

A signal peptide spans 1–19 (MGAAAKLAFAVFLISCSSG). Topologically, residues 20–135 (AILGRSETQE…TSNPVTPKPP (116 aa)) are extracellular. Intrachain disulfides connect C30/C60, C50/C78, C85/C104, C91/C103, and C105/C110. N43 and N66 each carry an N-linked (GlcNAc...) asparagine glycan. A helical transmembrane segment spans residues 136–161 (YYNILLYSLVPLMLVAGIVICAFWVY). At 162 to 513 (RHHKMAYPPV…VDFPPKESSL (352 aa)) the chain is on the cytoplasmic side. The 294-residue stretch at 192–485 (LQLLEVKARG…GERITQMQRL (294 aa)) folds into the Protein kinase domain. ATP is bound by residues 198 to 206 (KARGGFGCV) and K219. D322 functions as the Proton acceptor in the catalytic mechanism.

Belongs to the protein kinase superfamily. TKL Ser/Thr protein kinase family. TGFB receptor subfamily. Part of a complex consisting of MAGI2/ARIP1, ACVR2A, ACVR1B and SMAD3. Interacts with MAGI2/ARIP1. Interacts with type I receptor ACVR1. Interacts with TSC22D1/TSC-22. Interacts with activin A/INHBA. Mg(2+) serves as cofactor. The cofactor is Mn(2+).

The protein localises to the cell membrane. The enzyme catalyses L-threonyl-[receptor-protein] + ATP = O-phospho-L-threonyl-[receptor-protein] + ADP + H(+). The catalysed reaction is L-seryl-[receptor-protein] + ATP = O-phospho-L-seryl-[receptor-protein] + ADP + H(+). Functionally, on ligand binding, forms a receptor complex consisting of two type II and two type I transmembrane serine/threonine kinases. Type II receptors phosphorylate and activate type I receptors which autophosphorylate, then bind and activate SMAD transcriptional regulators. Receptor for activin A, activin B and inhibin A. Mediates induction of adipogenesis by GDF6. This Ovis aries (Sheep) protein is Activin receptor type-2A (ACVR2A).